The chain runs to 42 residues: Cytochrome b6-f complex subunit 7 (42 aa).

A helical transmembrane segment spans residues 19 to 37 (AVTCIFMTLFGLSLGFALL).

It belongs to the PetM family. As to quaternary structure, the 4 large subunits of the cytochrome b6-f complex are cytochrome b6, subunit IV (17 kDa polypeptide, PetD), cytochrome f and the Rieske protein, while the 4 small subunits are PetG, PetL, PetM and PetN. The complex functions as a dimer.

The protein localises to the plastid. It localises to the chloroplast thylakoid membrane. Functionally, component of the cytochrome b6-f complex, which mediates electron transfer between photosystem II (PSII) and photosystem I (PSI), cyclic electron flow around PSI, and state transitions. This chain is Cytochrome b6-f complex subunit 7, found in Thalassiosira pseudonana (Marine diatom).